Reading from the N-terminus, the 60-residue chain is Ixodegrin-like peptide (60 aa).

Positions 1 to 19 (MNAVFIAALLILGTSTFDA) are cleaved as a signal peptide. The Cell attachment site motif lies at 49–51 (RGD).

This sequence belongs to the ixodegrin family. Post-translationally, contains 3 disulfide bonds. Expressed in salivary glands.

Its subcellular location is the secreted. In terms of biological role, tick salivary platelet aggregation inhibitor that plays an important part in the anti-hemostatic strategy of ticks. Inhibits platelet aggregation induced by ADP, thrombin and thromboxane A2 (TXA2). Blocks platelet adhesion to soluble collagen (most probably through the binding to alpha-2/beta-1 integrin (ITGA2/ITGB1)) and binds to purified glycoprotein IIb/IIIa (ITGA2B/ITGB3) in a dose-dependent manner. In vivo, reduces thrombus weight effectively in a rat arteriovenous shunt model and inhibits thrombosis in a carrageenan-induced mouse tail thrombosis model. The polypeptide is Ixodegrin-like peptide (Ixodes scapularis (Black-legged tick)).